Here is a 609-residue protein sequence, read N- to C-terminus: DNA mismatch repair protein MutL (609 aa).

Positions 364-386 (SVNSKPTDYRPAMSPSFKSTPNT) are disordered.

It belongs to the DNA mismatch repair MutL/HexB family.

Functionally, this protein is involved in the repair of mismatches in DNA. It is required for dam-dependent methyl-directed DNA mismatch repair. May act as a 'molecular matchmaker', a protein that promotes the formation of a stable complex between two or more DNA-binding proteins in an ATP-dependent manner without itself being part of a final effector complex. The chain is DNA mismatch repair protein MutL from Rickettsia akari (strain Hartford).